The following is a 351-amino-acid chain: Photosystem II D2 protein (351 aa).

Residues 39 to 59 traverse the membrane as a helical segment; it reads TAYLAIGGWLTGTTFVTSWYT. His116 contacts chlorophyll a. Residues 123–139 form a helical membrane-spanning segment; sequence GFMLRQFEIARLVGIRP. Residues Gln128 and Asn141 each contribute to the pheophytin a site. Residues 151-164 form a helical membrane-spanning segment; that stretch reads VFVSVFLMYPLGQS. His196 contacts chlorophyll a. Residues 206–226 traverse the membrane as a helical segment; sequence GALLCAIHGATVENTLFEDGE. Residues His213 and Phe260 each contribute to the a plastoquinone site. A Fe cation-binding site is contributed by His213. His267 provides a ligand contact to Fe cation. Residues 277–293 form a helical membrane-spanning segment; sequence GLWTSSIGIIGLALNLR.

Belongs to the reaction center PufL/M/PsbA/D family. As to quaternary structure, PSII is composed of 1 copy each of membrane proteins PsbA, PsbB, PsbC, PsbD, PsbE, PsbF, PsbH, PsbI, PsbJ, PsbK, PsbL, PsbM, PsbT, PsbX, PsbY, PsbZ, Psb30/Ycf12, peripheral proteins PsbO, CyanoQ (PsbQ), PsbU, PsbV and a large number of cofactors. It forms dimeric complexes. Requires The D1/D2 heterodimer binds P680, chlorophylls that are the primary electron donor of PSII, and subsequent electron acceptors. It shares a non-heme iron and each subunit binds pheophytin, quinone, additional chlorophylls, carotenoids and lipids. There is also a Cl(-1) ion associated with D1 and D2, which is required for oxygen evolution. The PSII complex binds additional chlorophylls, carotenoids and specific lipids. as cofactor.

It localises to the cellular thylakoid membrane. The catalysed reaction is 2 a plastoquinone + 4 hnu + 2 H2O = 2 a plastoquinol + O2. In terms of biological role, photosystem II (PSII) is a light-driven water:plastoquinone oxidoreductase that uses light energy to abstract electrons from H(2)O, generating O(2) and a proton gradient subsequently used for ATP formation. It consists of a core antenna complex that captures photons, and an electron transfer chain that converts photonic excitation into a charge separation. The D1/D2 (PsbA/PsbD) reaction center heterodimer binds P680, the primary electron donor of PSII as well as several subsequent electron acceptors. D2 is needed for assembly of a stable PSII complex. In Synechococcus sp. (strain CC9605), this protein is Photosystem II D2 protein.